Reading from the N-terminus, the 500-residue chain is Nitrate/nitrite transporter NrtP (500 aa).

12 consecutive transmembrane segments (helical) span residues 19–39 (WFAF…ATTI), 52–72 (TLGI…GMLL), 79–99 (ITYS…ALAQ), 109–129 (LLMG…AEWF), 147–167 (FGAF…SFFS), 175–195 (LAIA…YNTV), 220–240 (SFWA…LLAW), 247–267 (IHFL…GLFA), 364–384 (WTMT…HFIN), 389–409 (IPVA…GCGA), 425–445 (IAGN…TIFS), and 451–471 (TLFS…AFFL).

The protein belongs to the major facilitator superfamily. Nitrate/nitrite porter (TC 2.A.1.8) family.

Its subcellular location is the cell inner membrane. In terms of biological role, transport system for both nitrate and nitrite, with much higher affinity for nitrate than for nitrite. The protein is Nitrate/nitrite transporter NrtP of Nostoc punctiforme (strain ATCC 29133 / PCC 73102).